A 225-amino-acid chain; its full sequence is Gene 30 protein (225 aa).

Residues 48–73 form a disordered region; the sequence is RNSELGHPEVKKEETTQQPEKGEGMA. A compositionally biased stretch (basic and acidic residues) spans 51 to 73; it reads ELGHPEVKKEETTQQPEKGEGMA.

Essential for DNA synthesis. This Bacillus phage SP01 (Bacteriophage SP01) protein is Gene 30 protein (30).